The sequence spans 182 residues: Isopentenyl-diphosphate Delta-isomerase (182 aa).

Mn(2+)-binding residues include histidine 25 and histidine 32. In terms of domain architecture, Nudix hydrolase spans 30-164 (LLHLAFSSWL…PWAFSPWMVM (135 aa)). Residue cysteine 67 is part of the active site. Histidine 69 contacts Mn(2+). A Mg(2+)-binding site is contributed by glutamate 87. Mn(2+)-binding residues include glutamate 114 and glutamate 116. Residue glutamate 116 is part of the active site.

The protein belongs to the IPP isomerase type 1 family. As to quaternary structure, homodimer. It depends on Mg(2+) as a cofactor. Mn(2+) serves as cofactor.

Its subcellular location is the cytoplasm. The catalysed reaction is isopentenyl diphosphate = dimethylallyl diphosphate. It functions in the pathway isoprenoid biosynthesis; dimethylallyl diphosphate biosynthesis; dimethylallyl diphosphate from isopentenyl diphosphate: step 1/1. In terms of biological role, catalyzes the 1,3-allylic rearrangement of the homoallylic substrate isopentenyl (IPP) to its highly electrophilic allylic isomer, dimethylallyl diphosphate (DMAPP). This is Isopentenyl-diphosphate Delta-isomerase from Escherichia coli (strain SMS-3-5 / SECEC).